The chain runs to 87 residues: Small ribosomal subunit protein uS17 (87 aa).

It belongs to the universal ribosomal protein uS17 family. In terms of assembly, part of the 30S ribosomal subunit.

Its function is as follows. One of the primary rRNA binding proteins, it binds specifically to the 5'-end of 16S ribosomal RNA. This Bacillus velezensis (strain DSM 23117 / BGSC 10A6 / LMG 26770 / FZB42) (Bacillus amyloliquefaciens subsp. plantarum) protein is Small ribosomal subunit protein uS17.